The following is a 220-amino-acid chain: Iron-sulfur cluster repair protein YtfE (220 aa).

Belongs to the RIC family. YtfE subfamily. Homodimer.

It is found in the cytoplasm. Functionally, di-iron-containing protein involved in the repair of iron-sulfur clusters damaged by oxidative and nitrosative stress conditions. The protein is Iron-sulfur cluster repair protein YtfE of Escherichia coli (strain SMS-3-5 / SECEC).